The sequence spans 129 residues: Short-chain dehydrogenase/reductase homolog YusR (129 aa).

Belongs to the short-chain dehydrogenases/reductases (SDR) family.

The protein is Short-chain dehydrogenase/reductase homolog YusR (yusR) of Bacillus subtilis (strain 168).